Reading from the N-terminus, the 352-residue chain is Type II restriction enzyme HaeII (352 aa).

The catalysed reaction is Endonucleolytic cleavage of DNA to give specific double-stranded fragments with terminal 5'-phosphates.. In terms of biological role, a P subtype restriction enzyme that recognizes the double-stranded sequence 5'-RGCGCY-3' and cleaves after C-5. The chain is Type II restriction enzyme HaeII (haeIIR) from Haemophilus aegyptius.